The primary structure comprises 348 residues: Protein RecA (348 aa).

Residue glycine 68–threonine 75 participates in ATP binding.

Belongs to the RecA family.

Its subcellular location is the cytoplasm. Functionally, can catalyze the hydrolysis of ATP in the presence of single-stranded DNA, the ATP-dependent uptake of single-stranded DNA by duplex DNA, and the ATP-dependent hybridization of homologous single-stranded DNAs. It interacts with LexA causing its activation and leading to its autocatalytic cleavage. In Rhodococcus opacus (strain B4), this protein is Protein RecA.